The primary structure comprises 123 residues: Small ribosomal subunit protein uS13 (123 aa).

Residues 93-123 (HRKGLPVRGQNTKNNARTRKGPAKAIAGKKK) form a disordered region. Positions 108-123 (ARTRKGPAKAIAGKKK) are enriched in basic residues.

The protein belongs to the universal ribosomal protein uS13 family. Part of the 30S ribosomal subunit. Forms a loose heterodimer with protein S19. Forms two bridges to the 50S subunit in the 70S ribosome.

In terms of biological role, located at the top of the head of the 30S subunit, it contacts several helices of the 16S rRNA. In the 70S ribosome it contacts the 23S rRNA (bridge B1a) and protein L5 of the 50S subunit (bridge B1b), connecting the 2 subunits; these bridges are implicated in subunit movement. Contacts the tRNAs in the A and P-sites. The chain is Small ribosomal subunit protein uS13 from Leuconostoc mesenteroides subsp. mesenteroides (strain ATCC 8293 / DSM 20343 / BCRC 11652 / CCM 1803 / JCM 6124 / NCDO 523 / NBRC 100496 / NCIMB 8023 / NCTC 12954 / NRRL B-1118 / 37Y).